A 213-amino-acid chain; its full sequence is Pyridoxine/pyridoxamine 5'-phosphate oxidase (213 aa).

FMN-binding positions include 60 to 65 (RMVLMK), 75 to 76 (YS), Lys82, and Gln104. Lys65 serves as a coordination point for substrate. Residues Tyr122, Arg126, and Ser130 each contribute to the substrate site. FMN is bound by residues 139–140 (QS) and Trp184. 190–192 (RLH) provides a ligand contact to substrate. Arg194 contacts FMN.

This sequence belongs to the pyridoxamine 5'-phosphate oxidase family. As to quaternary structure, homodimer. The cofactor is FMN.

It catalyses the reaction pyridoxamine 5'-phosphate + O2 + H2O = pyridoxal 5'-phosphate + H2O2 + NH4(+). It carries out the reaction pyridoxine 5'-phosphate + O2 = pyridoxal 5'-phosphate + H2O2. It participates in cofactor metabolism; pyridoxal 5'-phosphate salvage; pyridoxal 5'-phosphate from pyridoxamine 5'-phosphate: step 1/1. The protein operates within cofactor metabolism; pyridoxal 5'-phosphate salvage; pyridoxal 5'-phosphate from pyridoxine 5'-phosphate: step 1/1. Its function is as follows. Catalyzes the oxidation of either pyridoxine 5'-phosphate (PNP) or pyridoxamine 5'-phosphate (PMP) into pyridoxal 5'-phosphate (PLP). The chain is Pyridoxine/pyridoxamine 5'-phosphate oxidase from Rhodopseudomonas palustris (strain BisB18).